A 514-amino-acid polypeptide reads, in one-letter code: MQQLNPAEISQLIKQRIQDLDTSATAKNEGTIVKVSDGIVQIHGLEDAMYGEMIEFEGDVYGMALNLEQDSVGAVVLGDYLGLQEGQKAYCTGRILEVPVGPELLGRVVDALGNPIDGKGPINAKLTDKVEKIAPGVIARQSVDEPVMTGYKAVDTMIPIGRGQRELIIGDRQTGKTAMAIDAIIAQKNSGIKCVYVAIGQKRSTIANVVRKLEETGALAYTTVVVASASEPAALQYIAPYSGCTMGEYFRDRGEDALIVYDDLSKQAVAYRQISLLLRRPPGREAYPGDVFYLHSRLLERASRVNAAYVEEFTNGEVKGQTGSLTALPIIETQAGDVSAFVPTNVISITDGQIFLESSLFNSGIRPAVNAGISVSRVGGAAQTKIIKKLSGGIRTALAQYRELAAFAQFASDLDDATKQQLDHGERVTELMKQKQYQPMSIAEQAAVIFASNEGYLSAIPVEKIGAWEEAYLRYMYDEQADLMQEINDTANYNDDIAGRLKSSVETFLQNHTF.

170 to 177 is a binding site for ATP; it reads GDRQTGKT.

The protein belongs to the ATPase alpha/beta chains family. As to quaternary structure, F-type ATPases have 2 components, CF(1) - the catalytic core - and CF(0) - the membrane proton channel. CF(1) has five subunits: alpha(3), beta(3), gamma(1), delta(1), epsilon(1). CF(0) has three main subunits: a(1), b(2) and c(9-12). The alpha and beta chains form an alternating ring which encloses part of the gamma chain. CF(1) is attached to CF(0) by a central stalk formed by the gamma and epsilon chains, while a peripheral stalk is formed by the delta and b chains.

The protein resides in the cell inner membrane. The catalysed reaction is ATP + H2O + 4 H(+)(in) = ADP + phosphate + 5 H(+)(out). Functionally, produces ATP from ADP in the presence of a proton gradient across the membrane. The alpha chain is a regulatory subunit. The protein is ATP synthase subunit alpha of Psychrobacter sp. (strain PRwf-1).